The following is a 651-amino-acid chain: Acetyl-coenzyme A synthetase (651 aa).

CoA contacts are provided by residues 189–192 (RGGK), Thr311, and Asn335. Residues 387–389 (GEP), 411–416 (DTWWQT), Asp500, and Arg515 each bind ATP. Ser523 provides a ligand contact to CoA. Arg526 contacts ATP. Mg(2+)-binding residues include Val537, His539, and Val542. Arg584 lines the CoA pocket. Lys609 carries the post-translational modification N6-acetyllysine.

This sequence belongs to the ATP-dependent AMP-binding enzyme family. It depends on Mg(2+) as a cofactor. In terms of processing, acetylated. Deacetylation by the SIR2-homolog deacetylase activates the enzyme.

The catalysed reaction is acetate + ATP + CoA = acetyl-CoA + AMP + diphosphate. Its function is as follows. Catalyzes the conversion of acetate into acetyl-CoA (AcCoA), an essential intermediate at the junction of anabolic and catabolic pathways. AcsA undergoes a two-step reaction. In the first half reaction, AcsA combines acetate with ATP to form acetyl-adenylate (AcAMP) intermediate. In the second half reaction, it can then transfer the acetyl group from AcAMP to the sulfhydryl group of CoA, forming the product AcCoA. The chain is Acetyl-coenzyme A synthetase from Rhizobium leguminosarum bv. trifolii (strain WSM2304).